Reading from the N-terminus, the 95-residue chain is Aspartyl/glutamyl-tRNA(Asn/Gln) amidotransferase subunit C (95 aa).

The protein belongs to the GatC family. As to quaternary structure, heterotrimer of A, B and C subunits.

The catalysed reaction is L-glutamyl-tRNA(Gln) + L-glutamine + ATP + H2O = L-glutaminyl-tRNA(Gln) + L-glutamate + ADP + phosphate + H(+). The enzyme catalyses L-aspartyl-tRNA(Asn) + L-glutamine + ATP + H2O = L-asparaginyl-tRNA(Asn) + L-glutamate + ADP + phosphate + 2 H(+). Allows the formation of correctly charged Asn-tRNA(Asn) or Gln-tRNA(Gln) through the transamidation of misacylated Asp-tRNA(Asn) or Glu-tRNA(Gln) in organisms which lack either or both of asparaginyl-tRNA or glutaminyl-tRNA synthetases. The reaction takes place in the presence of glutamine and ATP through an activated phospho-Asp-tRNA(Asn) or phospho-Glu-tRNA(Gln). This is Aspartyl/glutamyl-tRNA(Asn/Gln) amidotransferase subunit C from Brucella melitensis biotype 2 (strain ATCC 23457).